A 170-amino-acid chain; its full sequence is Putative pre-16S rRNA nuclease (170 aa).

The tract at residues 1–29 (MVAASHRSPDRPGDPEGLEPGTGRGRRLG) is disordered.

This sequence belongs to the YqgF nuclease family.

Its subcellular location is the cytoplasm. In terms of biological role, could be a nuclease involved in processing of the 5'-end of pre-16S rRNA. This chain is Putative pre-16S rRNA nuclease, found in Mycobacterium ulcerans (strain Agy99).